Reading from the N-terminus, the 1484-residue chain is Chromosome partition protein MukB (1484 aa).

34 to 41 (GGNGAGKS) contributes to the ATP binding site. Coiled coils occupy residues 326-418 (LEAD…QYNQ), 444-472 (LDTF…QTAH), and 509-602 (RHLA…QRAP). A flexible hinge region spans residues 666-783 (PGGAEDQRLN…SLPIFGRAAR (118 aa)). Coiled-coil stretches lie at residues 835–923 (EAEI…AKLE), 977–1116 (EMLS…AKAG), and 1209–1265 (VEAI…LQSV). A disordered region spans residues 1049–1074 (ADSGAEERARQRRDELHAQLSNNRSR). Basic and acidic residues predominate over residues 1051 to 1065 (SGAEERARQRRDELH).

Belongs to the SMC family. MukB subfamily. In terms of assembly, homodimerization via its hinge domain. Binds to DNA via its C-terminal region. Interacts, and probably forms a ternary complex, with MukE and MukF via its C-terminal region. The complex formation is stimulated by calcium or magnesium. Interacts with tubulin-related protein FtsZ.

The protein resides in the cytoplasm. It is found in the nucleoid. In terms of biological role, plays a central role in chromosome condensation, segregation and cell cycle progression. Functions as a homodimer, which is essential for chromosome partition. Involved in negative DNA supercoiling in vivo, and by this means organize and compact chromosomes. May achieve or facilitate chromosome segregation by condensation DNA from both sides of a centrally located replisome during cell division. The polypeptide is Chromosome partition protein MukB (Salmonella dublin (strain CT_02021853)).